The chain runs to 332 residues: 2,3-diketo-L-gulonate reductase (332 aa).

The active-site Proton donor is His44. Residues 168-174 (ITMVDMS), 224-225 (WK), and 304-306 (GHE) contribute to the NAD(+) site.

Belongs to the LDH2/MDH2 oxidoreductase family. DlgD subfamily. In terms of assembly, homodimer.

Its subcellular location is the cytoplasm. The enzyme catalyses 3-dehydro-L-gulonate + NAD(+) = 2,3-dioxo-L-gulonate + NADH + H(+). It catalyses the reaction 3-dehydro-L-gulonate + NADP(+) = 2,3-dioxo-L-gulonate + NADPH + H(+). Its function is as follows. Catalyzes the reduction of 2,3-diketo-L-gulonate in the presence of NADH, to form 3-keto-L-gulonate. This Salmonella paratyphi B (strain ATCC BAA-1250 / SPB7) protein is 2,3-diketo-L-gulonate reductase.